The following is a 602-amino-acid chain: PEX5-related protein (602 aa).

Disordered stretches follow at residues 94–140 (VSQT…PETS) and 167–206 (HLMA…LNSE). Phosphoserine occurs at positions 181, 229, 233, and 237. TPR repeat units lie at residues 302–335 (WPGA…DPGN), 336–369 (AEAW…QPNN), and 371–403 (KALM…NPKY). 2 positions are modified to phosphoserine: Ser-421 and Ser-423. TPR repeat units follow at residues 450 to 483 (PDLQ…RPED), 485 to 517 (SLWN…QPGF), and 519 to 551 (RSRY…QRKS).

It belongs to the peroxisomal targeting signal receptor family. As to quaternary structure, forms an obligate 4:4 complex with HCN2. Interacts with RAB8B. Interacts with HCN3. Interacts with HCN4 with a 4:4 HCN4:PEX5L stoichiometry; reduces the effects of cAMP on the voltage-dependence and rate of activation of HCN4. In terms of tissue distribution, brain specific.

It is found in the cytoplasm. The protein resides in the membrane. In terms of biological role, accessory subunit of hyperpolarization-activated cyclic nucleotide-gated (HCN) channels, regulating their cell-surface expression and cyclic nucleotide dependence. The protein is PEX5-related protein (Pex5l) of Rattus norvegicus (Rat).